Here is a 371-residue protein sequence, read N- to C-terminus: MRAIGLMSGTSMDGIDAALIETDGETVAWLGSALTIPYGAETRALLEGAMADARGVNARTDRPGRLVEAERRITTLHGAAVRALLDSLRLTPADIDVVGFHGQTVLHRPDAALTVQIGLGQALADDLRIPVVADLRAADVAAGGQGAPLVPVFHQALVRGLDLPQPVAVLNIGGVANVTVLEDGADPIACDTGPGNALLDDFMAARTGRPYDDDGASAARGQVDEAAVAEVLGHPFFAAPPPKSLDRNEFRAFVTERLHLAGASTDDGAATLTALSAASIAAVVPLLPKAPKSWIVAGGGARNSTLRAMLAERLGVPVVVAEQVGWSADALEAHAFGFLAVRSLKGLALTFPTTTGAPEPLTGGVLFQPTP.

9 to 16 (GTSMDGID) lines the ATP pocket.

It belongs to the anhydro-N-acetylmuramic acid kinase family.

It catalyses the reaction 1,6-anhydro-N-acetyl-beta-muramate + ATP + H2O = N-acetyl-D-muramate 6-phosphate + ADP + H(+). The protein operates within amino-sugar metabolism; 1,6-anhydro-N-acetylmuramate degradation. It participates in cell wall biogenesis; peptidoglycan recycling. Its function is as follows. Catalyzes the specific phosphorylation of 1,6-anhydro-N-acetylmuramic acid (anhMurNAc) with the simultaneous cleavage of the 1,6-anhydro ring, generating MurNAc-6-P. Is required for the utilization of anhMurNAc either imported from the medium or derived from its own cell wall murein, and thus plays a role in cell wall recycling. The chain is Anhydro-N-acetylmuramic acid kinase from Azorhizobium caulinodans (strain ATCC 43989 / DSM 5975 / JCM 20966 / LMG 6465 / NBRC 14845 / NCIMB 13405 / ORS 571).